The sequence spans 95 residues: Co-chaperonin GroES (95 aa).

This sequence belongs to the GroES chaperonin family. Heptamer of 7 subunits arranged in a ring. Interacts with the chaperonin GroEL.

It localises to the cytoplasm. Its function is as follows. Together with the chaperonin GroEL, plays an essential role in assisting protein folding. The GroEL-GroES system forms a nano-cage that allows encapsulation of the non-native substrate proteins and provides a physical environment optimized to promote and accelerate protein folding. GroES binds to the apical surface of the GroEL ring, thereby capping the opening of the GroEL channel. This Ruegeria sp. (strain TM1040) (Silicibacter sp.) protein is Co-chaperonin GroES.